The chain runs to 727 residues: ATP-dependent zinc metalloprotease FtsH (727 aa).

Residues 1-6 lie on the Cytoplasmic side of the membrane; it reads MQKAFR. The chain crosses the membrane as a helical span at residues 7–27; the sequence is NVLVIAIIGVIIFGVFSYING. At 28-110 the chain is on the extracellular side; sequence NGNTPKQLSY…KVKEEEKQSV (83 aa). Residues 111-131 traverse the membrane as a helical segment; sequence FVSMLTTLIPVLIIAFLFIFF. Over 132-727 the chain is Cytoplasmic; that stretch reads LSQAQGGGGG…PNDPNNPSNR (596 aa). 205-212 contacts ATP; it reads GPPGTGKT. Histidine 427 contacts Zn(2+). The active site involves glutamate 428. The Zn(2+) site is built by histidine 431 and aspartate 503. Composition is skewed to basic and acidic residues over residues 645-684 and 691-706; these read LEEG…DQLR and NDQH…DTGH. The interval 645–727 is disordered; that stretch reads LEEGKEDMRE…PNDPNNPSNR (83 aa). Residues 710 to 727 show a composition bias toward low complexity; the sequence is PNIDKPYNPNDPNNPSNR.

The protein in the central section; belongs to the AAA ATPase family. In the C-terminal section; belongs to the peptidase M41 family. Homohexamer. Zn(2+) is required as a cofactor.

It is found in the cell membrane. Acts as a processive, ATP-dependent zinc metallopeptidase for both cytoplasmic and membrane proteins. Plays a role in the quality control of integral membrane proteins. The protein is ATP-dependent zinc metalloprotease FtsH of Staphylococcus haemolyticus (strain JCSC1435).